The sequence spans 227 residues: Cytochrome c oxidase subunit 2 (227 aa).

Topologically, residues 1–14 are mitochondrial intermembrane; the sequence is MAYPFQLGLQDASS. Residues 15–45 traverse the membrane as a helical segment; sequence PIMEELTNFHDHTLMIVFLISSLVLYIISSM. The Mitochondrial matrix segment spans residues 46-59; it reads LTTKMTHTSTMDAQ. A helical membrane pass occupies residues 60-87; sequence EVETIWTVLPAVILILIALPSLRILYMM. Residues 88–227 lie on the Mitochondrial intermembrane side of the membrane; that stretch reads DEINNPVLTV…HFENWSTSMI (140 aa). Cu cation-binding residues include histidine 161, cysteine 196, glutamate 198, cysteine 200, histidine 204, and methionine 207. Glutamate 198 serves as a coordination point for Mg(2+).

The protein belongs to the cytochrome c oxidase subunit 2 family. As to quaternary structure, component of the cytochrome c oxidase (complex IV, CIV), a multisubunit enzyme composed of 14 subunits. The complex is composed of a catalytic core of 3 subunits MT-CO1, MT-CO2 and MT-CO3, encoded in the mitochondrial DNA, and 11 supernumerary subunits COX4I, COX5A, COX5B, COX6A, COX6B, COX6C, COX7A, COX7B, COX7C, COX8 and NDUFA4, which are encoded in the nuclear genome. The complex exists as a monomer or a dimer and forms supercomplexes (SCs) in the inner mitochondrial membrane with NADH-ubiquinone oxidoreductase (complex I, CI) and ubiquinol-cytochrome c oxidoreductase (cytochrome b-c1 complex, complex III, CIII), resulting in different assemblies (supercomplex SCI(1)III(2)IV(1) and megacomplex MCI(2)III(2)IV(2)). Found in a complex with TMEM177, COA6, COX18, COX20, SCO1 and SCO2. Interacts with TMEM177 in a COX20-dependent manner. Interacts with COX20. Interacts with COX16. Requires Cu cation as cofactor.

It is found in the mitochondrion inner membrane. It carries out the reaction 4 Fe(II)-[cytochrome c] + O2 + 8 H(+)(in) = 4 Fe(III)-[cytochrome c] + 2 H2O + 4 H(+)(out). In terms of biological role, component of the cytochrome c oxidase, the last enzyme in the mitochondrial electron transport chain which drives oxidative phosphorylation. The respiratory chain contains 3 multisubunit complexes succinate dehydrogenase (complex II, CII), ubiquinol-cytochrome c oxidoreductase (cytochrome b-c1 complex, complex III, CIII) and cytochrome c oxidase (complex IV, CIV), that cooperate to transfer electrons derived from NADH and succinate to molecular oxygen, creating an electrochemical gradient over the inner membrane that drives transmembrane transport and the ATP synthase. Cytochrome c oxidase is the component of the respiratory chain that catalyzes the reduction of oxygen to water. Electrons originating from reduced cytochrome c in the intermembrane space (IMS) are transferred via the dinuclear copper A center (CU(A)) of subunit 2 and heme A of subunit 1 to the active site in subunit 1, a binuclear center (BNC) formed by heme A3 and copper B (CU(B)). The BNC reduces molecular oxygen to 2 water molecules using 4 electrons from cytochrome c in the IMS and 4 protons from the mitochondrial matrix. The polypeptide is Cytochrome c oxidase subunit 2 (MT-CO2) (Lophuromys flavopunctatus (Yellow-spotted brush-furred rat)).